A 376-amino-acid chain; its full sequence is Carbamoyl phosphate synthase small chain (376 aa).

The tract at residues 1-183 (MENILLNKAL…IYKKKYIEKN (183 aa)) is CPSase. Residues serine 51, glycine 235, and glycine 237 each coordinate L-glutamine. One can recognise a Glutamine amidotransferase type-1 domain in the interval 187–374 (NIVAYDFGIK…INLVKDYRLN (188 aa)). The active-site Nucleophile is the cysteine 263. Residues leucine 264, glutamine 267, asparagine 305, and phenylalanine 308 each coordinate L-glutamine. Catalysis depends on residues histidine 347 and glutamate 349.

It belongs to the CarA family. In terms of assembly, composed of two chains; the small (or glutamine) chain promotes the hydrolysis of glutamine to ammonia, which is used by the large (or ammonia) chain to synthesize carbamoyl phosphate. Tetramer of heterodimers (alpha,beta)4.

It catalyses the reaction hydrogencarbonate + L-glutamine + 2 ATP + H2O = carbamoyl phosphate + L-glutamate + 2 ADP + phosphate + 2 H(+). The enzyme catalyses L-glutamine + H2O = L-glutamate + NH4(+). The protein operates within amino-acid biosynthesis; L-arginine biosynthesis; carbamoyl phosphate from bicarbonate: step 1/1. Its pathway is pyrimidine metabolism; UMP biosynthesis via de novo pathway; (S)-dihydroorotate from bicarbonate: step 1/3. Functionally, small subunit of the glutamine-dependent carbamoyl phosphate synthetase (CPSase). CPSase catalyzes the formation of carbamoyl phosphate from the ammonia moiety of glutamine, carbonate, and phosphate donated by ATP, constituting the first step of 2 biosynthetic pathways, one leading to arginine and/or urea and the other to pyrimidine nucleotides. The small subunit (glutamine amidotransferase) binds and cleaves glutamine to supply the large subunit with the substrate ammonia. The sequence is that of Carbamoyl phosphate synthase small chain from Wigglesworthia glossinidia brevipalpis.